A 78-amino-acid chain; its full sequence is Large ribosomal subunit protein bL28B (78 aa).

It belongs to the bacterial ribosomal protein bL28 family.

The chain is Large ribosomal subunit protein bL28B (rpmB2) from Streptomyces coelicolor (strain ATCC BAA-471 / A3(2) / M145).